The chain runs to 265 residues: 3-methyl-2-oxobutanoate hydroxymethyltransferase (265 aa).

Mg(2+) contacts are provided by Asp41 and Asp80. 3-methyl-2-oxobutanoate contacts are provided by residues 41–42, Asp80, and Lys110; that span reads DS. Mg(2+) is bound at residue Glu112. The active-site Proton acceptor is Glu179.

It belongs to the PanB family. As to quaternary structure, homodecamer; pentamer of dimers. Mg(2+) serves as cofactor.

The protein localises to the cytoplasm. It catalyses the reaction 3-methyl-2-oxobutanoate + (6R)-5,10-methylene-5,6,7,8-tetrahydrofolate + H2O = 2-dehydropantoate + (6S)-5,6,7,8-tetrahydrofolate. Its pathway is cofactor biosynthesis; (R)-pantothenate biosynthesis; (R)-pantoate from 3-methyl-2-oxobutanoate: step 1/2. In terms of biological role, catalyzes the reversible reaction in which hydroxymethyl group from 5,10-methylenetetrahydrofolate is transferred onto alpha-ketoisovalerate to form ketopantoate. This Pseudothermotoga lettingae (strain ATCC BAA-301 / DSM 14385 / NBRC 107922 / TMO) (Thermotoga lettingae) protein is 3-methyl-2-oxobutanoate hydroxymethyltransferase.